The following is a 675-amino-acid chain: Polyphosphate kinase (675 aa).

An ATP-binding site is contributed by Asn42. Residues Arg372 and Arg401 each contribute to the Mg(2+) site. The Phosphohistidine intermediate role is filled by His431. The ATP site is built by Tyr464, Arg558, and His586.

It belongs to the polyphosphate kinase 1 (PPK1) family. It depends on Mg(2+) as a cofactor. In terms of processing, an intermediate of this reaction is the autophosphorylated ppk in which a phosphate is covalently linked to a histidine residue through a N-P bond.

The catalysed reaction is [phosphate](n) + ATP = [phosphate](n+1) + ADP. Catalyzes the reversible transfer of the terminal phosphate of ATP to form a long-chain polyphosphate (polyP). The polypeptide is Polyphosphate kinase (Helicobacter pylori (strain ATCC 700392 / 26695) (Campylobacter pylori)).